The chain runs to 622 residues: Polypeptide N-acetylgalactosaminyltransferase 6 (622 aa).

Residues 1–8 (MRLLRRRH) are Cytoplasmic-facing. The helical; Signal-anchor for type II membrane protein transmembrane segment at 9–28 (MSLRLAMLGSVFMLFLFIRQ) threads the bilayer. At 29–622 (KDVSNQEQAM…RDPYQLWLFV (594 aa)) the chain is on the lumenal side. The N-linked (GlcNAc...) asparagine glycan is linked to Asn86. Residues 176–285 (LPTTSVIIVF…HGWLEPLLAR (110 aa)) form a catalytic subdomain A region. Residues Asp269, His271, and His407 each coordinate Mn(2+). Residues 348–410 (PIKSPTFAGG…PCSVVGHVFR (63 aa)) are catalytic subdomain B. N-linked (GlcNAc...) asparagine glycosylation is present at Asn476. The 117-residue stretch at 506–622 (TNQCLDVGEN…RDPYQLWLFV (117 aa)) folds into the Ricin B-type lectin domain. Cys509 and Cys527 form a disulfide bridge. Residues Asp511, Glu514, His528, and Asn533 each contribute to the UDP-N-acetyl-alpha-D-galactosamine site. Disulfide bonds link Cys553/Cys566 and Cys597/Cys610.

The protein belongs to the glycosyltransferase 2 family. GalNAc-T subfamily. Mn(2+) is required as a cofactor.

The protein resides in the golgi apparatus membrane. The enzyme catalyses L-seryl-[protein] + UDP-N-acetyl-alpha-D-galactosamine = a 3-O-[N-acetyl-alpha-D-galactosaminyl]-L-seryl-[protein] + UDP + H(+). The catalysed reaction is L-threonyl-[protein] + UDP-N-acetyl-alpha-D-galactosamine = a 3-O-[N-acetyl-alpha-D-galactosaminyl]-L-threonyl-[protein] + UDP + H(+). It participates in protein modification; protein glycosylation. In terms of biological role, catalyzes the initial reaction in O-linked oligosaccharide biosynthesis, the transfer of an N-acetyl-D-galactosamine residue to a serine or threonine residue on the protein receptor. May participate in synthesis of oncofetal fibronectin. Has activity toward Muc1a, Muc2, EA2 and fibronectin peptides. In Mus musculus (Mouse), this protein is Polypeptide N-acetylgalactosaminyltransferase 6 (Galnt6).